The following is a 310-amino-acid chain: tRNA-5-methyluridine(54) 2-sulfurtransferase (310 aa).

Zn(2+) is bound by residues Cys-3, Cys-6, Cys-22, and His-25. ATP contacts are provided by Ala-53 and Ile-79. Residues Cys-128 and Cys-131 each coordinate [4Fe-4S] cluster. Cys-128 and Cys-220 are joined by a disulfide. Residues Lys-135 and Gly-154 each contribute to the ATP site. Cys-220 is a [4Fe-4S] cluster binding site. Zn(2+)-binding residues include Cys-272, Cys-275, Cys-284, and Cys-287.

Belongs to the TtcA family. TtuA subfamily. As to quaternary structure, homodimer. [4Fe-4S] cluster is required as a cofactor. Requires Mg(2+) as cofactor.

It carries out the reaction 5-methyluridine(54) in tRNA + hydrogen sulfide + ATP = 5-methyl-2-thiouridine(54) in tRNA + AMP + diphosphate. It participates in tRNA modification. Its function is as follows. Catalyzes the ATP-dependent 2-thiolation of 5-methyluridine residue at position 54 in the T loop of tRNAs, leading to 5-methyl-2-thiouridine (m(5)s(2)U or s(2)T). This modification allows thermal stabilization of tRNAs in thermophilic microorganisms, and is required for cell growth at high temperatures. Can use free sulfide as sulfur source in vitro, which may be also the sulfur source in vivo. This chain is tRNA-5-methyluridine(54) 2-sulfurtransferase, found in Pyrococcus horikoshii (strain ATCC 700860 / DSM 12428 / JCM 9974 / NBRC 100139 / OT-3).